Here is a 254-residue protein sequence, read N- to C-terminus: Undecaprenyl-diphosphatase (254 aa).

A run of 8 helical transmembrane segments spans residues 1 to 21, 41 to 61, 75 to 95, 96 to 116, 130 to 150, 174 to 194, 210 to 230, and 234 to 254; these read MGIIESIILGIVEGLTEFLPV, AHKAFEVAIQSGAILAVVFLY, LIIAFIPTGILGFLLYKIIKG, LFSPYIVSIMLIVGGLVFIAV, ILKIPYYKAFFIGVFQSIAMI, AEFSFLLAVPTMFAATSYDIM, TGFVTAFVFAVLAIKLFIGFV, and NFVPFGIYRIILGFIFLLFVL.

The protein belongs to the UppP family.

Its subcellular location is the cell inner membrane. The catalysed reaction is di-trans,octa-cis-undecaprenyl diphosphate + H2O = di-trans,octa-cis-undecaprenyl phosphate + phosphate + H(+). In terms of biological role, catalyzes the dephosphorylation of undecaprenyl diphosphate (UPP). Confers resistance to bacitracin. The protein is Undecaprenyl-diphosphatase of Persephonella marina (strain DSM 14350 / EX-H1).